The following is a 274-amino-acid chain: Undecaprenyl-diphosphatase 1 (274 aa).

The next 8 helical transmembrane spans lie at 4–24 (LLLLKAAIMGIVEGITEFLPI), 45–65 (SAVFVVAIQMGAIAAVIYEYW), 84–104 (HLAISLILASIPIVLVGLSFG), 111–131 (LFNDVAVAIGLIVGGVIIMWI), 146–166 (IGLKQAIWIGLIQVLSLIPGT), 186–206 (ATEFSFFLGIPVIIGAGLLDL), 217–237 (FDWSVLGVGILVSFVSALLLI), and 249–269 (FMVFAWYRIVSGLLILLFAYT).

The protein belongs to the UppP family.

The protein localises to the cell inner membrane. The enzyme catalyses di-trans,octa-cis-undecaprenyl diphosphate + H2O = di-trans,octa-cis-undecaprenyl phosphate + phosphate + H(+). Functionally, catalyzes the dephosphorylation of undecaprenyl diphosphate (UPP). Confers resistance to bacitracin. The chain is Undecaprenyl-diphosphatase 1 from Acinetobacter baylyi (strain ATCC 33305 / BD413 / ADP1).